The sequence spans 477 residues: Solute carrier family 2, facilitated glucose transporter member 8 (477 aa).

At 1–25 (MSPEDPQETQPLLRPPEARTPRGRR) the chain is on the cytoplasmic side. The Dileucine internalization motif motif lies at 12 to 13 (LL). A helical membrane pass occupies residues 26 to 46 (VFLASFAAALGPLSFGFALGY). Residues 47–70 (SSPAIPSLRRTAPPALRLGDNAAS) lie on the Extracellular side of the membrane. A helical transmembrane segment spans residues 71-91 (WFGAVVTLGAAAGGILGGWLL). The Cytoplasmic portion of the chain corresponds to 92–96 (DRAGR). A helical membrane pass occupies residues 97–117 (KLSLLLCTVPFVTGFAVITAA). The Extracellular segment spans residues 118-127 (RDVWMLLGGR). Residues 128-148 (LLTGLACGVASLVAPVYISEI) traverse the membrane as a helical segment. Residues 149–156 (AYPAVRGL) are Cytoplasmic-facing. Residues 157 to 177 (LGSCVQLMVVTGILLAYVAGW) form a helical membrane-spanning segment. Residue Q162 participates in D-glucose binding. The Extracellular segment spans residues 178–182 (VLEWR). The helical transmembrane segment at 183-203 (WLAVLGCVPPTLMLLLMCYMP) threads the bilayer. The Cytoplasmic segment spans residues 204 to 257 (ETPRFLLTQHQYQEAMAALRFLWGSEEGWEEPPVGAEHQGFQLALLRRPGIYKP). The helical transmembrane segment at 258-278 (LIIGISLMVFQQLSGVNAIMF) threads the bilayer. Residues 268–269 (QQ) and N274 each bind D-glucose. Topologically, residues 279 to 293 (YANSIFEEAKFKDSS) are extracellular. A helical membrane pass occupies residues 294-314 (LASVTVGIIQVLFTAVAALIM). At 315–320 (DRAGRR) the chain is on the cytoplasmic side. The chain crosses the membrane as a helical span at residues 321 to 341 (LLLALSGVIMVFSMSAFGTYF). Over 342-367 (KLTQSLPSNSSHVGLVPIAAEPVDVQ) the chain is Extracellular. N-linked (GlcNAc...) asparagine glycosylation occurs at N350. A helical transmembrane segment spans residues 368 to 388 (VGLAWLAVGSMCLFIAGFAVG). Residues 389–404 (WGPIPWLLMSEIFPLH) are Cytoplasmic-facing. W394 provides a ligand contact to D-glucose. A helical transmembrane segment spans residues 405-425 (VKGVATGICVLTNWFMAFLVT). Residues 426-438 (KEFSSVMEMLRPY) are Extracellular-facing. The helical transmembrane segment at 439–459 (GAFWLTAAFCALSVLFTLTVV) threads the bilayer. Residues 460-477 (PETKGRTLEQVTAHFEGR) are Cytoplasmic-facing.

It belongs to the major facilitator superfamily. Sugar transporter (TC 2.A.1.1) family. Glucose transporter subfamily. In terms of assembly, interacts with AP2B1. Also able to mediate the transport of dehydroascorbate. In terms of tissue distribution, highest level of expression in placenta and testis. Highly expressed in adult and pubertal testis, but not prepubertal testis. Lower levels of expression in brain, liver, heart, kidney, fat and skeletal muscle.

It localises to the cell membrane. The protein resides in the cytoplasmic vesicle membrane. The enzyme catalyses D-glucose(out) = D-glucose(in). It catalyses the reaction D-fructose(out) = D-fructose(in). The catalysed reaction is L-dehydroascorbate(out) = L-dehydroascorbate(in). It carries out the reaction alpha,alpha-trehalose(in) = alpha,alpha-trehalose(out). With respect to regulation, inhibited by cytochalasin B. Its function is as follows. Insulin-regulated facilitative hexose transporter that mediates the transport of glucose and fructose. Facilitates hepatic influx of dietary trehalose, which in turn inhibits glucose and fructose influx triggering a starvation signal and hepatic autophagy through activation of AMPK and ULK1. Also able to mediate the transport of dehydroascorbate. This is Solute carrier family 2, facilitated glucose transporter member 8 from Mus musculus (Mouse).